The following is a 653-amino-acid chain: Eukaryotic translation initiation factor 4E-binding protein Mextli (653 aa).

The KH domain occupies 227–292 (YCKDEVVIRN…DKINYAKQLM (66 aa)). 2 disordered regions span residues 311 to 335 (VGGS…TPTG) and 515 to 570 (EGDD…AGTN). 2 stretches are compositionally biased toward low complexity: residues 314 to 323 (SCSSLNSSNS) and 525 to 536 (SNGGSSTSNQNG). Over residues 546–563 (SRKESTPETKGAREKGDL) the composition is skewed to basic and acidic residues.

As to quaternary structure, interacts with eukaryotic translation initiation factor eIF4E1. Also interacts with eukaryotic translation initiation factor 3 complex members eif3-S9/eif3b, Int6/eif3e and eIF-3p40/eif3h and with CG3225.

Its subcellular location is the cytoplasm. The protein localises to the cytoplasmic ribonucleoprotein granule. Functionally, plays a role in promoting translation. The polypeptide is Eukaryotic translation initiation factor 4E-binding protein Mextli (Drosophila melanogaster (Fruit fly)).